We begin with the raw amino-acid sequence, 114 residues long: Vacuolar ATPase assembly integral membrane protein VMA21 (114 aa).

Topologically, residues 1-39 (MATRRIISQEKTLLEKDDSIGSSPAADEKSNIAPAVPTS) are cytoplasmic. The helical transmembrane segment at 40–60 (VIMKLLAFTLGMIVIPIGSYF) threads the bilayer. Topologically, residues 61–73 (ATVDSVFNGNSTY) are lumenal. The helical transmembrane segment at 74 to 94 (AGALAAIMANVVLIGYIFVAM) threads the bilayer. The Cytoplasmic portion of the chain corresponds to 95–114 (AEDQSDQQEGGGPGDGKKDR). A Prevents secretion from ER motif is present at residues 111–114 (KKDR).

Belongs to the VMA21 family.

It localises to the endoplasmic reticulum membrane. The protein resides in the endoplasmic reticulum-Golgi intermediate compartment membrane. It is found in the cytoplasmic vesicle. Its subcellular location is the COPII-coated vesicle membrane. Functionally, required for the assembly of the V0 complex of the vacuolar ATPase (V-ATPase) in the endoplasmic reticulum. The sequence is that of Vacuolar ATPase assembly integral membrane protein VMA21 from Chaetomium globosum (strain ATCC 6205 / CBS 148.51 / DSM 1962 / NBRC 6347 / NRRL 1970) (Soil fungus).